The chain runs to 267 residues: Myb-related protein Hv1 (267 aa).

2 HTH myb-type domains span residues 9-61 and 62-116; these read KAHT…INYL and RPDL…RRKL. DNA-binding regions (H-T-H motif) lie at residues 37–61 and 89–112; these read WRSL…INYL and WSLI…NTHI.

In terms of tissue distribution, germinating seed and apical meristem of shoot and root.

The protein localises to the nucleus. Possible transcription activator in response to an external signal. May be involved in the regulation of flavonoid biosynthesis. In Hordeum vulgare (Barley), this protein is Myb-related protein Hv1 (MYB1).